Here is a 427-residue protein sequence, read N- to C-terminus: 3-phosphoshikimate 1-carboxyvinyltransferase (427 aa).

Residues lysine 22, serine 23, and arginine 27 each coordinate 3-phosphoshikimate. Lysine 22 contacts phosphoenolpyruvate. Glycine 96 and arginine 124 together coordinate phosphoenolpyruvate. Residues serine 169, serine 170, glutamine 171, serine 197, aspartate 313, asparagine 336, and lysine 340 each coordinate 3-phosphoshikimate. Glutamine 171 contributes to the phosphoenolpyruvate binding site. Aspartate 313 (proton acceptor) is an active-site residue. Positions 344, 386, and 411 each coordinate phosphoenolpyruvate.

The protein belongs to the EPSP synthase family. Monomer.

It is found in the cytoplasm. It carries out the reaction 3-phosphoshikimate + phosphoenolpyruvate = 5-O-(1-carboxyvinyl)-3-phosphoshikimate + phosphate. It functions in the pathway metabolic intermediate biosynthesis; chorismate biosynthesis; chorismate from D-erythrose 4-phosphate and phosphoenolpyruvate: step 6/7. Functionally, catalyzes the transfer of the enolpyruvyl moiety of phosphoenolpyruvate (PEP) to the 5-hydroxyl of shikimate-3-phosphate (S3P) to produce enolpyruvyl shikimate-3-phosphate and inorganic phosphate. This is 3-phosphoshikimate 1-carboxyvinyltransferase from Enterobacter sp. (strain 638).